A 298-amino-acid chain; its full sequence is Release factor glutamine methyltransferase (298 aa).

S-adenosyl-L-methionine contacts are provided by residues 131 to 135 (GTGTG), D162, W189, and N205. 205–208 (NPPY) is a binding site for substrate.

Belongs to the protein N5-glutamine methyltransferase family. PrmC subfamily.

The enzyme catalyses L-glutaminyl-[peptide chain release factor] + S-adenosyl-L-methionine = N(5)-methyl-L-glutaminyl-[peptide chain release factor] + S-adenosyl-L-homocysteine + H(+). Methylates the class 1 translation termination release factors RF1/PrfA and RF2/PrfB on the glutamine residue of the universally conserved GGQ motif. This Pasteurella multocida (strain Pm70) protein is Release factor glutamine methyltransferase.